Reading from the N-terminus, the 81-residue chain is ARGDAEKWESLISEERACKGEGVKGCYDKPDDWCCKKTPCKCPAWSHERECRCTQPCARRCRGKRALMLDPETHRLLFSED.

A propeptide spanning residues 1-16 (ARGDAEKWESLISEER) is cleaved from the precursor. 4 disulfide bridges follow: Cys-18-Cys-35, Cys-26-Cys-40, Cys-34-Cys-53, and Cys-42-Cys-51. Arginine amide is present on Arg-62. The propeptide occupies 66–81 (ALMLDPETHRLLFSED).

It belongs to the neurotoxin 28 (Litx) family. Expressed by the venom gland.

Its subcellular location is the secreted. Functionally, toxin active against insects (S.frugiperda larvae). May act on sodium (Nav) or calcium (Cav) channels. The protein is U1-sicaritoxin-Li1c of Loxosceles intermedia (Brown spider).